The chain runs to 50 residues: uncharacterized protein (50 aa).

A helical membrane pass occupies residues leucine 10–isoleucine 29.

It localises to the plastid. The protein resides in the chloroplast membrane. This is an uncharacterized protein from Marchantia polymorpha (Common liverwort).